Here is a 1458-residue protein sequence, read N- to C-terminus: ATPase family AAA domain-containing protein 2B (1458 aa).

Residues 1–155 (MVNTRKSSLR…LRGEKKGDGD (155 aa)) are disordered. Residue S16 is modified to Phosphoserine. A compositionally biased stretch (gly residues) spans 23-33 (PGAGAEPGATG). Over residues 34–58 (GSSHFISSRTRSSKTRAASCPAAKA) the composition is skewed to low complexity. A phosphoserine mark is found at S79, S81, and S86. The span at 99 to 115 (VCKDKSKSRSTGQREEW) shows a compositional bias: basic and acidic residues. The segment covering 116-129 (NLSTGQARLTSQPG) has biased composition (polar residues). S140 carries the phosphoserine modification. T221 bears the Phosphothreonine mark. Residues 244–286 (NSYGIQNHHEVSTEGEEEESQEEDGDIEVEEAEGEENDRPYNL) form a disordered region. Residues 256–279 (TEGEEEESQEEDGDIEVEEAEGEE) are compositionally biased toward acidic residues. A Phosphoserine modification is found at S318. The span at 321-332 (RRSHIRRKKHAI) shows a compositional bias: basic residues. The disordered stretch occupies residues 321-353 (RRSHIRRKKHAIHSSDTTSSDEERFERRKSKSM). Position 441 to 448 (441 to 448 (GPPGTGKT)) interacts with ATP. S939 carries the post-translational modification Phosphoserine. Residues 943 to 974 (QLSESEKSRMEDQEENTLRELRLFLRDVTKRL) adopt a coiled-coil conformation. The Bromo domain occupies 951–1066 (RMEDQEENTL…DTAHAIIAAE (116 aa)). Disordered stretches follow at residues 1189–1208 (DCHEENGEETGDLSMTNDES), 1217–1257 (QGQR…EQTS), and 1309–1330 (LLEDQSKEKPETSTENHGDDLE). Residues 1240–1252 (NESLLVNSSSSLN) are compositionally biased toward low complexity. Phosphoserine occurs at positions 1338 and 1347.

It belongs to the AAA ATPase family. In terms of assembly, binds acetylated lysine residues in histone H1.4, H2A, H2B, H3 and H4 (in vitro).

Its subcellular location is the nucleus. The chain is ATPase family AAA domain-containing protein 2B (ATAD2B) from Homo sapiens (Human).